Reading from the N-terminus, the 708-residue chain is Capsid scaffolding protein (708 aa).

Residues H63, S132, and H157 each act as charge relay system in the active site. 3 disordered regions span residues S270–P339, H455–R565, and A593–E620. Residues P284 to S293 are compositionally biased toward low complexity. Over residues S294 to P311 the composition is skewed to pro residues. Low complexity predominate over residues S326–P339. The interval A333–G352 is interaction with pAP. The segment covering K498–K513 has biased composition (basic residues). Short sequence motifs (nuclear localization signal) lie at residues K510–T515 and R537–K543. Positions A593–T615 are enriched in low complexity. The segment at P688–E708 is interaction with major capsid protein.

This sequence belongs to the herpesviridae capsid scaffolding protein family. Homomultimer. Interacts with major capsid protein. As to quaternary structure, exists in a monomer-dimer equilibrium with the dimer being the active species. In terms of processing, capsid scaffolding protein is cleaved by assemblin after formation of the spherical procapsid. As a result, the capsid obtains its mature, icosahedral shape. Cleavages occur at two or more sites: release (R-site) and maturation (M-site).

The protein localises to the host cytoplasm. It localises to the host nucleus. It catalyses the reaction Cleaves -Ala-|-Ser- and -Ala-|-Ala- bonds in the scaffold protein.. Its function is as follows. Acts as a scaffold protein by binding major capsid protein in the cytoplasm, inducing the nuclear localization of both proteins. Multimerizes in the nucleus such as major capsid protein forms the icosahedral T=16 capsid. Autocatalytic cleavage releases the assembly protein, and subsequently abolishes interaction with major capsid protein. Cleavages products are evicted from the capsid before or during DNA packaging. Protease that plays an essential role in virion assembly within the nucleus. Catalyzes the cleavage of the assembly protein after formation of the spherical procapsid. By that cleavage, the capsid matures and gains its icosahedral shape. The cleavage sites seem to include -Ala-Ser-, -Ala-Ala-, as well as Ala-Thr bonds. Assemblin and cleavages products are evicted from the capsid before or during DNA packaging. Functionally, plays a major role in capsid assembly. Acts as a scaffold protein by binding major capsid protein. Multimerizes in the nucleus such as major capsid protein forms the icosahedral T=16 capsid. Cleaved by assemblin after capsid completion. The cleavages products are evicted from the capsid before or during DNA packaging. In Homo sapiens (Human), this protein is Capsid scaffolding protein (UL80).